The sequence spans 575 residues: E3 ubiquitin-protein ligase kcmf-1 (575 aa).

The ZZ-type zinc-finger motif lies at 9–73 (HEGVSCDGCA…PMQLILSSVD (65 aa)). The Zn(2+) site is built by C14, C17, C29, C32, C38, C41, H59, and H63. 2 disordered regions span residues 277–306 (PIYP…DDND) and 530–575 (EADE…INID). 2 stretches are compositionally biased toward acidic residues: residues 297–306 (SADESEDDND) and 530–563 (EADE…ENDS).

The protein belongs to the KCMF1 family.

The protein localises to the cytoplasm. It is found in the late endosome. Its subcellular location is the lysosome. The enzyme catalyses S-ubiquitinyl-[E2 ubiquitin-conjugating enzyme]-L-cysteine + [acceptor protein]-L-lysine = [E2 ubiquitin-conjugating enzyme]-L-cysteine + N(6)-ubiquitinyl-[acceptor protein]-L-lysine.. It functions in the pathway protein modification; protein ubiquitination. In terms of biological role, E3 ubiquitin-protein ligase which accepts ubiquitin from an E2 ubiquitin-conjugating enzyme and then transfers it to targeted substrates, promoting their degradation by the proteasome. In Caenorhabditis elegans, this protein is E3 ubiquitin-protein ligase kcmf-1.